The sequence spans 321 residues: Outer envelope protein 36, chloroplastic (321 aa).

Belongs to the OEP80 (TC 1.B.33.2) family. In terms of tissue distribution, expressed in germinating seeds.

The protein resides in the plastid. It is found in the chloroplast outer membrane. May play a role during plastid development. This chain is Outer envelope protein 36, chloroplastic, found in Arabidopsis thaliana (Mouse-ear cress).